The chain runs to 201 residues: Orotate phosphoribosyltransferase (201 aa).

113–121 serves as a coordination point for 5-phospho-alpha-D-ribose 1-diphosphate; sequence EDIITTGKS. Thr117 and Arg145 together coordinate orotate.

Belongs to the purine/pyrimidine phosphoribosyltransferase family. PyrE subfamily. In terms of assembly, homodimer. Mg(2+) serves as cofactor.

It carries out the reaction orotidine 5'-phosphate + diphosphate = orotate + 5-phospho-alpha-D-ribose 1-diphosphate. The protein operates within pyrimidine metabolism; UMP biosynthesis via de novo pathway; UMP from orotate: step 1/2. Catalyzes the transfer of a ribosyl phosphate group from 5-phosphoribose 1-diphosphate to orotate, leading to the formation of orotidine monophosphate (OMP). This Helicobacter pylori (strain HPAG1) protein is Orotate phosphoribosyltransferase.